The chain runs to 271 residues: Tryptophan synthase alpha chain (271 aa).

Residues Glu56 and Asp67 each act as proton acceptor in the active site.

Belongs to the TrpA family. As to quaternary structure, tetramer of two alpha and two beta chains.

It carries out the reaction (1S,2R)-1-C-(indol-3-yl)glycerol 3-phosphate + L-serine = D-glyceraldehyde 3-phosphate + L-tryptophan + H2O. Its pathway is amino-acid biosynthesis; L-tryptophan biosynthesis; L-tryptophan from chorismate: step 5/5. Functionally, the alpha subunit is responsible for the aldol cleavage of indoleglycerol phosphate to indole and glyceraldehyde 3-phosphate. The chain is Tryptophan synthase alpha chain from Mycolicibacterium paratuberculosis (strain ATCC BAA-968 / K-10) (Mycobacterium paratuberculosis).